The chain runs to 129 residues: UPF0146 protein VNG_2609C (129 aa).

The protein belongs to the UPF0146 family.

The chain is UPF0146 protein VNG_2609C from Halobacterium salinarum (strain ATCC 700922 / JCM 11081 / NRC-1) (Halobacterium halobium).